A 317-amino-acid polypeptide reads, in one-letter code: Neurogenic differentiation factor 6-B (317 aa).

Disordered regions lie at residues 1 to 90 (MLTV…ERSR) and 297 to 317 (DLHPRSQSFQSQDELNTGYHN). Over residues 37–56 (EAEDDNTDREEEEEREEDEN) the composition is skewed to acidic residues. The span at 59 to 69 (PKKKGPRKKKS) shows a compositional bias: basic residues. A Nuclear localization signal motif is present at residues 65-70 (RKKKSE). The segment covering 70-90 (EGRGDRVKMRRQEANARERSR) has biased composition (basic and acidic residues). One can recognise a bHLH domain in the interval 78-130 (MRRQEANARERSRMHGLNDALESLRKVVPCYSKTQKLSKIETLRLAKNYIWAL). Residues 301 to 317 (RSQSFQSQDELNTGYHN) show a composition bias toward polar residues.

As to quaternary structure, efficient DNA binding requires dimerization with another bHLH protein. As to expression, embryonic olfactory bulbs and olfactory placodes. In adult, expressed in brain and eye.

It localises to the nucleus. Its function is as follows. Differentiation factor required for neurogenesis. Does not act as an upstream activator of isl1. The polypeptide is Neurogenic differentiation factor 6-B (Danio rerio (Zebrafish)).